The primary structure comprises 340 residues: Ketol-acid reductoisomerase (NADP(+)) (340 aa).

The KARI N-terminal Rossmann domain maps to 3–183 (LSVYYDKDCN…GGGRTGIIET (181 aa)). NADP(+)-binding positions include 26 to 29 (FGSQ), serine 54, and 84 to 87 (DELQ). Residue histidine 109 is part of the active site. Residue glycine 135 participates in NADP(+) binding. Residues 184-329 (TFKDETETDL…ERLRAMMPWI (146 aa)) form the KARI C-terminal knotted domain. 4 residues coordinate Mg(2+): aspartate 192, glutamate 196, glutamate 228, and glutamate 232. Substrate is bound at residue serine 253.

Belongs to the ketol-acid reductoisomerase family. The cofactor is Mg(2+).

The enzyme catalyses (2R)-2,3-dihydroxy-3-methylbutanoate + NADP(+) = (2S)-2-acetolactate + NADPH + H(+). It carries out the reaction (2R,3R)-2,3-dihydroxy-3-methylpentanoate + NADP(+) = (S)-2-ethyl-2-hydroxy-3-oxobutanoate + NADPH + H(+). It participates in amino-acid biosynthesis; L-isoleucine biosynthesis; L-isoleucine from 2-oxobutanoate: step 2/4. It functions in the pathway amino-acid biosynthesis; L-valine biosynthesis; L-valine from pyruvate: step 2/4. In terms of biological role, involved in the biosynthesis of branched-chain amino acids (BCAA). Catalyzes an alkyl-migration followed by a ketol-acid reduction of (S)-2-acetolactate (S2AL) to yield (R)-2,3-dihydroxy-isovalerate. In the isomerase reaction, S2AL is rearranged via a Mg-dependent methyl migration to produce 3-hydroxy-3-methyl-2-ketobutyrate (HMKB). In the reductase reaction, this 2-ketoacid undergoes a metal-dependent reduction by NADPH to yield (R)-2,3-dihydroxy-isovalerate. The polypeptide is Ketol-acid reductoisomerase (NADP(+)) (Wolinella succinogenes (strain ATCC 29543 / DSM 1740 / CCUG 13145 / JCM 31913 / LMG 7466 / NCTC 11488 / FDC 602W) (Vibrio succinogenes)).